The chain runs to 100 residues: MAKKSLIYREKKRQQLEKKYHLIRRSSKKEISKIPSLSEKWKIHGKLQSPPRNSAPTRLHRRCFSTGRPRANYRDFGLSGHILREMVHACLLPGATRSSW.

The protein belongs to the universal ribosomal protein uS14 family. Part of the 30S ribosomal subunit.

The protein localises to the plastid. It is found in the chloroplast. Functionally, binds 16S rRNA, required for the assembly of 30S particles. The polypeptide is Small ribosomal subunit protein uS14c (Nasturtium officinale (Watercress)).